Here is an 86-residue protein sequence, read N- to C-terminus: Large ribosomal subunit protein bL27 (86 aa).

Belongs to the bacterial ribosomal protein bL27 family.

The sequence is that of Large ribosomal subunit protein bL27 from Xanthomonas campestris pv. campestris (strain 8004).